The primary structure comprises 171 residues: Adenine phosphoribosyltransferase (171 aa).

This sequence belongs to the purine/pyrimidine phosphoribosyltransferase family. In terms of assembly, homodimer.

It localises to the cytoplasm. It catalyses the reaction AMP + diphosphate = 5-phospho-alpha-D-ribose 1-diphosphate + adenine. It functions in the pathway purine metabolism; AMP biosynthesis via salvage pathway; AMP from adenine: step 1/1. Functionally, catalyzes a salvage reaction resulting in the formation of AMP, that is energically less costly than de novo synthesis. The chain is Adenine phosphoribosyltransferase from Ruminiclostridium cellulolyticum (strain ATCC 35319 / DSM 5812 / JCM 6584 / H10) (Clostridium cellulolyticum).